Reading from the N-terminus, the 298-residue chain is Porphobilinogen deaminase (298 aa).

Cys-242 is subject to S-(dipyrrolylmethanemethyl)cysteine.

This sequence belongs to the HMBS family. Monomer. It depends on dipyrromethane as a cofactor.

The catalysed reaction is 4 porphobilinogen + H2O = hydroxymethylbilane + 4 NH4(+). It participates in porphyrin-containing compound metabolism; protoporphyrin-IX biosynthesis; coproporphyrinogen-III from 5-aminolevulinate: step 2/4. Tetrapolymerization of the monopyrrole PBG into the hydroxymethylbilane pre-uroporphyrinogen in several discrete steps. This chain is Porphobilinogen deaminase, found in Fusobacterium nucleatum subsp. nucleatum (strain ATCC 25586 / DSM 15643 / BCRC 10681 / CIP 101130 / JCM 8532 / KCTC 2640 / LMG 13131 / VPI 4355).